The primary structure comprises 1083 residues: MSSEDIIYDPQFKPVQGIYENRLRQFIDTGGDYHDLNLPKFYDKKRISLDHDHVKVWWYQVSFERGSSPVSPDKRPSWKSIIERDKKGELEFREANINQPFGPSWSTTWFKVKISLPEDWVKSNEQLLFQWDCSNEGIVIDPKTLIPVTAFSGGERTEYVLPKTSDGKHFFYIEAGNNGMFGCGAGSTINPPDDNRFFHLRKADIVWPDLDARALYIDFWMLGDAARELPGDSWQKHQARQLGNAVMNLFDPNDRSSVRKCRELLQREYFDSFLESSKVYEQGESQVLTNVYGIGNCHIDTAWLWPFAETRRKIVRSWSSQCTLMDRFPEYKFVASQAQQFKWLLEDHPEFFNKVLIPKIQQSQFFAVGGTWVENDTNIPSGESLARQFFFGQRFFLKHFGLKSKIFWLPDTFGYSSQMPQLCRLSGIDKFLTQKLSWNNINSFPHSTFNWAGIDGSQLLTHMPPGNTYTADSHFGDVLRTAKQNKTPEYYGSGLMLYGKGDGGGGPTEEMLQKMRRIRSMNNRNGNVIPKLQVGITVDEFYDDILKRTNQGHDLPTWSGELYFEFHRGTYTSQAQTKKLMRLSEIKLHDLEWIAAKTSVLYPDSYKYPSKQINELWENVLLCQFHDVLPGSCIEMVYKYEAVPMLHNVVKECTSLIDKTVQFLQSQSKADLVEMRTLTWSKPEKVSEECSLNGSYTSSVTGYDDYIVLANGKLKVIICKKTGVITSITDETLGVEYLDTEHGRNKLGANQFVIYDDKPLGWQAWDTELYSVNQYKYVTKPKKVQVSCNTKEKCAVEVIFQISEKCKIKSVISLNATAVTDAKLSKVDISTTVENWDARNKFLKVEFPVNIRNDFASYETQFGITKRPTHYNTSWDVAKFEVCHHKFADYSEYSKGVSILNDCKYGFSTHGNLMRLSLLRSPKAPDAHADMGTHEIKYAIYPHRGALSSDTVKLAHEFNYCFKYKLPKDIGMNFDDIISISGDENVILSNIKRGEDDSAVKSNYSLNPRDEQSIVVRVYESLGGESFASLNTTLNLKRIEKVDNLEMKVYKSLTATRDESNHAINRIPIKLRPFEIASFRLYF.

Ser2 bears the N-acetylserine mark. Positions 298, 300, 411, and 626 each coordinate Zn(2+). The Nucleophile role is filled by Asp411.

Belongs to the glycosyl hydrolase 38 family. As to quaternary structure, composed of isoforms with three constituent polypeptides described as [(107 kDa)-n (73 kDa)-(6-n) (31 kDa)-(6-n)], where n is 0-6. The 73 kDa and the 31 kDa polypeptides may be proteolytic derivatives of the 107 kDa polypeptide in the vacuole. Oligomerizes in the cytoplasm and retains its oligomeric form during import into the vacuole. Requires Zn(2+) as cofactor. The N-terminus is blocked.

Its subcellular location is the vacuole. It catalyses the reaction Hydrolysis of terminal, non-reducing alpha-D-mannose residues in alpha-D-mannosides.. Functionally, degrades free oligosaccharides in the vacuole. In Saccharomyces cerevisiae (strain ATCC 204508 / S288c) (Baker's yeast), this protein is Alpha-mannosidase (AMS1).